A 629-amino-acid chain; its full sequence is tRNA uridine 5-carboxymethylaminomethyl modification enzyme MnmG (629 aa).

An FAD-binding site is contributed by 13-18 (GGGHAG). Residue 273 to 287 (GPRYCPSIEDKIHRF) coordinates NAD(+).

The protein belongs to the MnmG family. Homodimer. Heterotetramer of two MnmE and two MnmG subunits. It depends on FAD as a cofactor.

The protein localises to the cytoplasm. In terms of biological role, NAD-binding protein involved in the addition of a carboxymethylaminomethyl (cmnm) group at the wobble position (U34) of certain tRNAs, forming tRNA-cmnm(5)s(2)U34. The polypeptide is tRNA uridine 5-carboxymethylaminomethyl modification enzyme MnmG (Shewanella baltica (strain OS195)).